We begin with the raw amino-acid sequence, 542 residues long: GMP synthase [glutamine-hydrolyzing] (542 aa).

In terms of domain architecture, Glutamine amidotransferase type-1 spans 28–218 (IIVILDFGSQ…VYHICHCEPT (191 aa)). Catalysis depends on Cys105, which acts as the Nucleophile. Active-site residues include His192 and Glu194. Residues 219 to 417 (WTTAAFIEES…IGLPEEIVRR (199 aa)) enclose the GMPS ATP-PPase domain. 246–252 (SGGVDSS) contributes to the ATP binding site.

Homodimer.

It catalyses the reaction XMP + L-glutamine + ATP + H2O = GMP + L-glutamate + AMP + diphosphate + 2 H(+). The protein operates within purine metabolism; GMP biosynthesis; GMP from XMP (L-Gln route): step 1/1. Its function is as follows. Catalyzes the synthesis of GMP from XMP. In Synechocystis sp. (strain ATCC 27184 / PCC 6803 / Kazusa), this protein is GMP synthase [glutamine-hydrolyzing] (guaA).